The sequence spans 157 residues: 6,7-dimethyl-8-ribityllumazine synthase (157 aa).

5-amino-6-(D-ribitylamino)uracil-binding positions include Phe-23, 57-59 (AFE), and 81-83 (AVI). Residue 86–87 (AT) participates in (2S)-2-hydroxy-3-oxobutyl phosphate binding. The Proton donor role is filled by His-89. Phe-114 serves as a coordination point for 5-amino-6-(D-ribitylamino)uracil. Position 128 (Arg-128) interacts with (2S)-2-hydroxy-3-oxobutyl phosphate.

It belongs to the DMRL synthase family.

It carries out the reaction (2S)-2-hydroxy-3-oxobutyl phosphate + 5-amino-6-(D-ribitylamino)uracil = 6,7-dimethyl-8-(1-D-ribityl)lumazine + phosphate + 2 H2O + H(+). It participates in cofactor biosynthesis; riboflavin biosynthesis; riboflavin from 2-hydroxy-3-oxobutyl phosphate and 5-amino-6-(D-ribitylamino)uracil: step 1/2. Catalyzes the formation of 6,7-dimethyl-8-ribityllumazine by condensation of 5-amino-6-(D-ribitylamino)uracil with 3,4-dihydroxy-2-butanone 4-phosphate. This is the penultimate step in the biosynthesis of riboflavin. The polypeptide is 6,7-dimethyl-8-ribityllumazine synthase (Desulforapulum autotrophicum (strain ATCC 43914 / DSM 3382 / VKM B-1955 / HRM2) (Desulfobacterium autotrophicum)).